Consider the following 404-residue polypeptide: Probable tRNA sulfurtransferase (404 aa).

A THUMP domain is found at 60–165 (RSVIEALKPV…DEAAYLSHED (106 aa)). Residues 183–184 (ML), 208–209 (HF), R265, G287, and Q296 contribute to the ATP site.

Belongs to the ThiI family.

It localises to the cytoplasm. The enzyme catalyses [ThiI sulfur-carrier protein]-S-sulfanyl-L-cysteine + a uridine in tRNA + 2 reduced [2Fe-2S]-[ferredoxin] + ATP + H(+) = [ThiI sulfur-carrier protein]-L-cysteine + a 4-thiouridine in tRNA + 2 oxidized [2Fe-2S]-[ferredoxin] + AMP + diphosphate. It carries out the reaction [ThiS sulfur-carrier protein]-C-terminal Gly-Gly-AMP + S-sulfanyl-L-cysteinyl-[cysteine desulfurase] + AH2 = [ThiS sulfur-carrier protein]-C-terminal-Gly-aminoethanethioate + L-cysteinyl-[cysteine desulfurase] + A + AMP + 2 H(+). Its pathway is cofactor biosynthesis; thiamine diphosphate biosynthesis. Functionally, catalyzes the ATP-dependent transfer of a sulfur to tRNA to produce 4-thiouridine in position 8 of tRNAs, which functions as a near-UV photosensor. Also catalyzes the transfer of sulfur to the sulfur carrier protein ThiS, forming ThiS-thiocarboxylate. This is a step in the synthesis of thiazole, in the thiamine biosynthesis pathway. The sulfur is donated as persulfide by IscS. The protein is Probable tRNA sulfurtransferase of Streptococcus equi subsp. equi (strain 4047).